The chain runs to 172 residues: MENIKNPKNADDCSDSISKNSHQGVDDSLNQSRSYVCSFCIRGFSNAQALGGHMNIHRRDRAKLRQKLMEDNKDDVVAESDASEVVSLDLNEQQQQQGEALTCDDHDQYVDNDISPKQKLEFWVQESKLDTNDHGKVTEASIDGSSSSHHRDIEVLDLELRLGQSVVKKKTT.

The interval Met1–Ser28 is disordered. The span at Asp15 to Ser28 shows a compositional bias: polar residues. Residues Tyr35 to His57 form a C2H2-type zinc finger. The EAR-like (transcriptional repression) signature appears at Leu156–Leu160.

In terms of tissue distribution, preferentially expressed in roots and flowers. Slightly expressed in leaves and stems.

It is found in the nucleus. Its function is as follows. Activation factor which mediates telomerase activity and potentiates responses to auxin through the regulation of BT2. Binds in vitro to the DNA sequence 5'-GACAGTGTTAC-3' of the BT2 promoter. This is Transcriptional regulator TAC1 (TAC1) from Arabidopsis thaliana (Mouse-ear cress).